Reading from the N-terminus, the 223-residue chain is Transcriptional regulator HMO1 (223 aa).

2 disordered regions span residues 69-89 and 165-223; these read IEAT…APKK and DGSA…HGSP. Residues 70–86 are compositionally biased toward basic and acidic residues; that stretch reads EATESKKKRKQEKDPNA. Positions 87-160 form a DNA-binding region, HMG box; sequence PKKPLTMFFQ…IYNIEKKKYE (74 aa). Over residues 204–223 the composition is skewed to basic residues; that stretch reads KKKKKTEKKEKKKKSGHGSP.

The protein localises to the nucleus. Transcription factor that binds upstream of hexose and ergosterol metabolism, as well as cell cycle genes. Activates pseudohyphal growth. This Candida albicans (strain SC5314 / ATCC MYA-2876) (Yeast) protein is Transcriptional regulator HMO1 (HMO1).